Consider the following 419-residue polypeptide: Farnesyl pyrophosphate synthase (419 aa).

Position 1 is an N-acetylmethionine (Met1). Isopentenyl diphosphate contacts are provided by Lys123, Arg126, and Gln162. Position 123 is an N6-(2-hydroxyisobutyryl)lysine; alternate (Lys123). Lys123 is subject to N6-acetyllysine; alternate. Mg(2+)-binding residues include Asp169 and Asp173. Arg178 is a binding site for dimethylallyl diphosphate. Isopentenyl diphosphate is bound at residue Arg179. The dimethylallyl diphosphate site is built by Lys266, Thr267, Gln306, Lys323, and Lys332. Lys353 is subject to N6-acetyllysine.

This sequence belongs to the FPP/GGPP synthase family. In terms of assembly, homodimer. Interacts with RSAD2. (Microbial infection) Interacts with HTLV-1 protein p13(II). Requires Mg(2+) as cofactor.

It is found in the cytoplasm. It carries out the reaction isopentenyl diphosphate + dimethylallyl diphosphate = (2E)-geranyl diphosphate + diphosphate. The enzyme catalyses isopentenyl diphosphate + (2E)-geranyl diphosphate = (2E,6E)-farnesyl diphosphate + diphosphate. It participates in isoprenoid biosynthesis; farnesyl diphosphate biosynthesis; farnesyl diphosphate from geranyl diphosphate and isopentenyl diphosphate: step 1/1. Its pathway is isoprenoid biosynthesis; geranyl diphosphate biosynthesis; geranyl diphosphate from dimethylallyl diphosphate and isopentenyl diphosphate: step 1/1. With respect to regulation, inactivated by interferon-induced RSAD2. This inactivation may result of disruption of lipid rafts at the plasma membrane, and thus have an antiviral effect since many enveloped viruses need lipid rafts to bud efficiently out of the cell. Its function is as follows. Key enzyme in isoprenoid biosynthesis which catalyzes the formation of farnesyl diphosphate (FPP), a precursor for several classes of essential metabolites including sterols, dolichols, carotenoids, and ubiquinones. FPP also serves as substrate for protein farnesylation and geranylgeranylation. Catalyzes the sequential condensation of isopentenyl pyrophosphate with the allylic pyrophosphates, dimethylallyl pyrophosphate, and then with the resultant geranylpyrophosphate to the ultimate product farnesyl pyrophosphate. The protein is Farnesyl pyrophosphate synthase of Homo sapiens (Human).